The following is a 232-amino-acid chain: Large ribosomal subunit protein uL1 (232 aa).

Belongs to the universal ribosomal protein uL1 family. Part of the 50S ribosomal subunit.

Functionally, binds directly to 23S rRNA. The L1 stalk is quite mobile in the ribosome, and is involved in E site tRNA release. Its function is as follows. Protein L1 is also a translational repressor protein, it controls the translation of the L11 operon by binding to its mRNA. The polypeptide is Large ribosomal subunit protein uL1 (Bacillus licheniformis (strain ATCC 14580 / DSM 13 / JCM 2505 / CCUG 7422 / NBRC 12200 / NCIMB 9375 / NCTC 10341 / NRRL NRS-1264 / Gibson 46)).